The following is a 134-amino-acid chain: Fluoride-specific ion channel FluC 2 (134 aa).

4 helical membrane-spanning segments follow: residues 8–28 (IVAI…LNTW), 40–60 (IENI…LVIV), 69–89 (LGVG…DSVL), and 99–119 (LIYV…GYLL). Na(+)-binding residues include Gly-75 and Thr-78.

Belongs to the fluoride channel Fluc/FEX (TC 1.A.43) family.

Its subcellular location is the cell membrane. It catalyses the reaction fluoride(in) = fluoride(out). Its activity is regulated as follows. Na(+) is not transported, but it plays an essential structural role and its presence is essential for fluoride channel function. Functionally, fluoride-specific ion channel. Important for reducing fluoride concentration in the cell, thus reducing its toxicity. This chain is Fluoride-specific ion channel FluC 2, found in Halalkalibacterium halodurans (strain ATCC BAA-125 / DSM 18197 / FERM 7344 / JCM 9153 / C-125) (Bacillus halodurans).